A 192-amino-acid polypeptide reads, in one-letter code: Der GTPase-activating protein YihI (192 aa).

The interval Met1–Pro80 is disordered. Basic and acidic residues-rich tracts occupy residues Arg9 to Gln25, Thr37 to Glu48, and Asp65 to Pro80.

The protein belongs to the YihI family. In terms of assembly, interacts with Der.

A GTPase-activating protein (GAP) that modifies Der/EngA GTPase function. May play a role in ribosome biogenesis. The polypeptide is Der GTPase-activating protein YihI (Actinobacillus pleuropneumoniae serotype 5b (strain L20)).